A 517-amino-acid polypeptide reads, in one-letter code: MAKAIMLQGTSSNVGKSVLAAALCRIFHRNGYRVSPFKSQNMALNSGATPDGGEMGRAQIVQAMAAGVVPRVEMNPILLKPTAHASSQVIVLGRPVGNLGAREYHGHFNQKLWSRVEEAYAFLEREFEIIVIEGAGSPAEINLKAGEIANMRVARMAGAPVLLVADIDRGGALAAVVGTLELLEPEERVMVAGIIINKFRGDLDLLKPALDFLESRTGKPVLGVIPFLPDHGLPEEDSVVLEGVTGRSTGAGEVEIAVIKLPCISNFTDFDALEREKGVNLRYVEAASDLGNPDLVILPGSKNTIGDLLWLRCQGLETAIKELAGRGTPIIGICGGYQMLGKEIRDPEHVETDVEMIKGLDLLPIKTVFQTSKATNQVRGVVTGSGPFLGPLQGQEVQGYEIHMGASFLLDGRPAFKITSRGGRLVTLDDGALAGEGRIWGTYIHGILDNDSLRHQVISVLRARRGLPARPGMLNFMAEQERRLDILAGEVARHLDLGRLAAIMGLERPLVWTGHDN.

The GATase cobBQ-type domain occupies 253 to 453 (EVEIAVIKLP…IHGILDNDSL (201 aa)). Cys334 acts as the Nucleophile in catalysis. His445 is an active-site residue.

This sequence belongs to the CobB/CobQ family. CobQ subfamily.

Its pathway is cofactor biosynthesis; adenosylcobalamin biosynthesis. Catalyzes amidations at positions B, D, E, and G on adenosylcobyrinic A,C-diamide. NH(2) groups are provided by glutamine, and one molecule of ATP is hydrogenolyzed for each amidation. The polypeptide is Cobyric acid synthase (Moorella thermoacetica (strain ATCC 39073 / JCM 9320)).